Consider the following 304-residue polypeptide: GTPase Era (304 aa).

An Era-type G domain is found at 11–179; it reads YCGFIAIVGR…QKIVRKSLRE (169 aa). Residues 19–26 are G1; the sequence is GRPNVGKS. Position 19 to 26 (19 to 26) interacts with GTP; it reads GRPNVGKS. The G2 stretch occupies residues 45 to 49; sequence QTTRH. The G3 stretch occupies residues 66–69; that stretch reads DTPG. Residues 66–70 and 128–131 each bind GTP; these read DTPGL and NKVD. The tract at residues 128–131 is G4; sequence NKVD. Residues 158 to 160 form a G5 region; that stretch reads ISA. A KH type-2 domain is found at 210 to 287; it reads TGEELPYSVT…HLELWVKVKA (78 aa).

Belongs to the TRAFAC class TrmE-Era-EngA-EngB-Septin-like GTPase superfamily. Era GTPase family. As to quaternary structure, monomer.

The protein resides in the cytoplasm. It is found in the cell inner membrane. An essential GTPase that binds both GDP and GTP, with rapid nucleotide exchange. Plays a role in 16S rRNA processing and 30S ribosomal subunit biogenesis and possibly also in cell cycle regulation and energy metabolism. This chain is GTPase Era, found in Actinobacillus pleuropneumoniae serotype 5b (strain L20).